We begin with the raw amino-acid sequence, 187 residues long: Elongation factor P (187 aa).

It belongs to the elongation factor P family.

The protein resides in the cytoplasm. The protein operates within protein biosynthesis; polypeptide chain elongation. Involved in peptide bond synthesis. Stimulates efficient translation and peptide-bond synthesis on native or reconstituted 70S ribosomes in vitro. Probably functions indirectly by altering the affinity of the ribosome for aminoacyl-tRNA, thus increasing their reactivity as acceptors for peptidyl transferase. The sequence is that of Elongation factor P from Kocuria rhizophila (strain ATCC 9341 / DSM 348 / NBRC 103217 / DC2201).